The sequence spans 785 residues: (+)-copalyl diphosphate synthase 3, chloroplastic (785 aa).

Residue lysine 238 participates in substrate binding. Mg(2+) is bound by residues aspartate 371 and aspartate 373. Positions 371-374 (DIDD) match the DXDD motif motif. Lysine 457 provides a ligand contact to substrate.

It belongs to the terpene synthase family. The cofactor is Mg(2+). Present in both leaves and flowers, with higher levels in leaves.

The protein localises to the plastid. It is found in the chloroplast. It carries out the reaction (2E,6E,10E)-geranylgeranyl diphosphate = (+)-copalyl diphosphate. Its pathway is secondary metabolite biosynthesis; terpenoid biosynthesis. In terms of biological role, involved in the biosynthesis of labdane-type diterpenoid including marrubiin and other labdane-related furanoid diterpenoids with potential applications as anti-diabetics, analgesics or vasorelaxants. Terpene synthase that produces (+)-copalyl diphosphate ((+)-CPP) from geranylgeranyl diphosphate (GGPP). In Marrubium vulgare (White horehound), this protein is (+)-copalyl diphosphate synthase 3, chloroplastic.